Here is a 185-residue protein sequence, read N- to C-terminus: Early nodulin-like protein 17 (185 aa).

The N-terminal stretch at 1–21 is a signal peptide; it reads MARRDQLVSFLCFFLIVSAVA. The Phytocyanin domain maps to 37 to 137; the sequence is KQYVVGGRSG…GQRLMINVDS (101 aa). N-linked (GlcNAc...) asparagine glycans are attached at residues Asn79 and Asn94. A disulfide bridge links Cys93 with Cys125. The disordered stretch occupies residues 136–155; sequence DSAPSPSPSPSPAPQEAATA. Ser156 carries the GPI-anchor amidated serine lipid modification. Residues 157–185 constitute a propeptide, removed in mature form; sequence AATSSSAATAAHALLLAAMAMMGLILGEW.

The protein belongs to the early nodulin-like (ENODL) family. Expressed ubiquitously. Accumulates mainly in anthers, stigmas and ovaries.

The protein localises to the cell membrane. In terms of biological role, may act as a carbohydrate transporter. Required for male fertility and seed yield. The chain is Early nodulin-like protein 17 from Oryza sativa subsp. japonica (Rice).